The sequence spans 629 residues: Carboxypeptidase Y homolog ARB_06361 (629 aa).

A signal peptide spans 1 to 18 (MLITWLLDVLLLAPPVAA). 2 N-linked (GlcNAc...) asparagine glycosylation sites follow: Asn-157 and Asn-197. The active site involves Ser-235. Cys-326 and Cys-355 form a disulfide bridge. Residues Asn-405 and Asn-418 are each glycosylated (N-linked (GlcNAc...) asparagine). Residue Asp-453 is part of the active site. Substrate is bound at residue Cys-456. Asn-463 and Asn-554 each carry an N-linked (GlcNAc...) asparagine glycan.

It belongs to the peptidase S10 family.

Its subcellular location is the secreted. The enzyme catalyses Release of a C-terminal amino acid with broad specificity.. In terms of biological role, involved in degradation of small peptides. This is Carboxypeptidase Y homolog ARB_06361 from Arthroderma benhamiae (strain ATCC MYA-4681 / CBS 112371) (Trichophyton mentagrophytes).